Here is a 778-residue protein sequence, read N- to C-terminus: Endonuclease MutS2 (778 aa).

G328–T335 provides a ligand contact to ATP. The region spanning L703 to G778 is the Smr domain.

The protein belongs to the DNA mismatch repair MutS family. MutS2 subfamily. As to quaternary structure, homodimer. Binds to stalled ribosomes, contacting rRNA.

Its function is as follows. Endonuclease that is involved in the suppression of homologous recombination and thus may have a key role in the control of bacterial genetic diversity. In terms of biological role, acts as a ribosome collision sensor, splitting the ribosome into its 2 subunits. Detects stalled/collided 70S ribosomes which it binds and splits by an ATP-hydrolysis driven conformational change. Acts upstream of the ribosome quality control system (RQC), a ribosome-associated complex that mediates the extraction of incompletely synthesized nascent chains from stalled ribosomes and their subsequent degradation. Probably generates substrates for RQC. This chain is Endonuclease MutS2, found in Streptococcus equi subsp. equi (strain 4047).